Here is a 342-residue protein sequence, read N- to C-terminus: Nucleoid-associated protein Sputcn32_2288 (342 aa).

Belongs to the YejK family.

The protein resides in the cytoplasm. Its subcellular location is the nucleoid. In Shewanella putrefaciens (strain CN-32 / ATCC BAA-453), this protein is Nucleoid-associated protein Sputcn32_2288.